Consider the following 187-residue polypeptide: Orotate phosphoribosyltransferase (187 aa).

5-phospho-alpha-D-ribose 1-diphosphate is bound by residues R99, K100, K103, H105, and 125-133 (DDVITTGGS). Residues T129 and R157 each coordinate orotate.

This sequence belongs to the purine/pyrimidine phosphoribosyltransferase family. PyrE subfamily. Homodimer. The cofactor is Mg(2+).

It carries out the reaction orotidine 5'-phosphate + diphosphate = orotate + 5-phospho-alpha-D-ribose 1-diphosphate. Its pathway is pyrimidine metabolism; UMP biosynthesis via de novo pathway; UMP from orotate: step 1/2. In terms of biological role, catalyzes the transfer of a ribosyl phosphate group from 5-phosphoribose 1-diphosphate to orotate, leading to the formation of orotidine monophosphate (OMP). This Leptospira borgpetersenii serovar Hardjo-bovis (strain L550) protein is Orotate phosphoribosyltransferase.